The sequence spans 78 residues: Large ribosomal subunit protein bL28 (78 aa).

This sequence belongs to the bacterial ribosomal protein bL28 family.

This is Large ribosomal subunit protein bL28 from Methylobacillus flagellatus (strain ATCC 51484 / DSM 6875 / VKM B-1610 / KT).